Reading from the N-terminus, the 416-residue chain is Gasdermin-B (416 aa).

Positions 1–280 (MFSVFEEITR…EKRKDVLNSL (280 aa)) are triggers pyroptosis. A run of 2 beta stranded transmembrane segments spans residues 83 to 101 (EFQI…VRLP) and 102 to 125 (KEIT…ENRI). Residues lysine 166, lysine 177, lysine 190, and lysine 192 each participate in a (Microbial infection) Glycyl lysine isopeptide (Lys-Gly) (interchain with G-Cter in ubiquitin) cross-link. Transmembrane regions (beta stranded) follow at residues 167–183 (EETL…SQIS) and 184–198 (QGHL…REVT). Residues 229–250 (KSFPEEKDGASSCLGKSLGSED) form a disordered region. The stretch at 248–276 (SEDSRNMKEKLEDMESVLKDLTEEKRKDV) forms a coiled coil. Residue methionine 308 forms a (Microbial infection) Glycyl lysine isopeptide (Lys-Gly) (interchain with G-Cter in ubiquitin) linkage.

This sequence belongs to the gasdermin family. In terms of assembly, homooligomer; homooligomeric ring-shaped pore complex containing 24-26 subunits when inserted in the membrane. Post-translationally, cleavage by granzyme A (GZMA) relieves autoinhibition by releasing the N-terminal moiety (Gasdermin-B, N-terminal) that initiates pyroptosis. Not cleaved by other granzymes. Major cleavage site takes places after Lys-244; a minor cleavage site takes place after Lys-229. Cleavage by neutrophil elastase ELANE, inhibits its ability to trigger pyroptosis. Palmitoylated. In terms of processing, (Microbial infection) Ubiquitinated by S.flexneri IpaH7.8, leading to its degradation by the proteasome, thereby preventing its ability to form pores in bacterial-derived membranes. In the gastrointestinal tract, expressed in proliferating cells, including in the basal cell layer of esophagus and in isthmus/neck of stomach.

The protein resides in the cytoplasm. It is found in the cell membrane. With respect to regulation, the full-length protein before cleavage is inactive: intramolecular interactions between N- and C-terminal domains mediate autoinhibition in the absence of activation signal. The intrinsic pyroptosis-inducing activity is carried by the released N-terminal moiety (Gasdermin-B, N-terminal) following cleavage by granzyme A (GZMA). Its function is as follows. Precursor of a pore-forming protein that acts as a downstream mediator of granzyme-mediated cell death. This form constitutes the precursor of the pore-forming protein: upon cleavage, the released N-terminal moiety (Gasdermin-B, N-terminal) binds to membranes and forms pores, triggering pyroptosis. Also acts as a regulator of epithelial cell repair independently of programmed cell death: translocates to the plasma membrane and promotes epithelial maintenance and repair by regulating PTK2/FAK-mediated phosphorylation of PDGFA. Functionally, pore-forming protein produced by cleavage by granzyme A (GZMA), which causes membrane permeabilization and pyroptosis in target cells of cytotoxic T and natural killer (NK) cells. Key downstream mediator of granzyme-mediated cell death: (1) granzyme A (GZMA), delivered to target cells from cytotoxic T- and NK-cells, (2) specifically cleaves Gasdermin-B to generate this form. After cleavage, moves to the plasma membrane, homooligomerizes within the membrane and forms pores of 10-15 nanometers (nm) of inner diameter, triggering pyroptosis. The different isoforms recognize and bind different phospholipids on membranes, promoting cell death of different target cells. Precursor of a pore-forming protein that acts as a downstream mediator of granzyme-mediated cell death and mediates pyroptosis. Following cleavage and activation by granzyme A (GZMA), the N-terminal part binds to membrane inner leaflet lipids, homooligomerizes within the human plasma membrane and forms pores of 10-15 nanometers (nm) of inner diameter, triggering pyroptosis. Recognizes and binds membrane inner leaflet lipids of human cells, such as phosphatidylinositol 4-phosphate, phosphatidylinositol 5-phosphate, bisphosphorylated phosphatidylinositols, such as phosphatidylinositol (4,5)-bisphosphate, and more weakly to phosphatidic acid. Also binds sufatide, a component of the apical membrane of epithelial cells. In terms of biological role, precursor of a pore-forming protein that acts as a downstream mediator of granzyme-mediated cell death and mediates pyroptosis of human cells. Following cleavage and activation by granzyme A (GZMA), the N-terminal part binds to membrane inner leaflet lipids, homooligomerizes within the human plasma membrane and forms pores of 10-15 nanometers (nm) of inner diameter, triggering pyroptosis. Its function is as follows. Precursor of a pore-forming protein that acts as a downstream mediator of granzyme-mediated cell death and specifically mediates cell death of Gram-negative bacteria in response to infection. Following cleavage and activation by granzyme A (GZMA), the N-terminal part recognizes and binds phospholipids found on Gram-negative bacterial membranes, such as lipid A and cariolipin, homooligomerizes within the bacterial membranes and forms pores, triggering pyroptosis followed by cell death. In contrast to isoform 4, does not bind to membrane inner leaflet lipids of host human cell, such as phosphatidylinositol 4-phosphate, phosphatidylinositol 5-phosphate, bisphosphorylated phosphatidylinositols, such as phosphatidylinositol (4,5)-bisphosphate. Functionally, not able to trigger pyroptosis. This is Gasdermin-B from Homo sapiens (Human).